A 216-amino-acid polypeptide reads, in one-letter code: uncharacterized protein (216 aa).

The N-terminal stretch at 1–17 is a signal peptide; it reads MLKKIIILFLGMFLLSA. Cys-18 carries N-palmitoyl cysteine lipidation. Cys-18 carries S-diacylglycerol cysteine lipidation. Residues 133 to 162 are a coiled coil; it reads SDKEKKIQEELNQIKAMLRETKRDISKYTC.

It localises to the cell membrane. This is an uncharacterized protein from Rickettsia conorii (strain ATCC VR-613 / Malish 7).